A 368-amino-acid chain; its full sequence is F-box protein At3g17710 (368 aa).

Residues 1 to 46 (MASVKLPWDLEEEILSRLPPRSLVRFRTVCKHWNGLFSDKRFVKKH) form the F-box domain.

The polypeptide is F-box protein At3g17710 (Arabidopsis thaliana (Mouse-ear cress)).